The chain runs to 314 residues: Oxaloacetate tautomerase FAHD2B, mitochondrial (314 aa).

The transit peptide at 1 to 84 (MLGSSGRRLL…ATLSVVRRAL (84 aa)) directs the protein to the mitochondrion. Residues E159, E161, and D190 each contribute to the Mg(2+) site. K203 bears the N6-acetyllysine; alternate mark. At K203 the chain carries N6-succinyllysine; alternate. K234 carries the post-translational modification N6-acetyllysine.

This sequence belongs to the FAH family. It depends on Mg(2+) as a cofactor. Requires Mn(2+) as cofactor.

It is found in the mitochondrion. The enzyme catalyses oxaloacetate = enol-oxaloacetate. Its function is as follows. Tautomerase that converts enol-oxaloacetate, a strong inhibitor of succinate dehydrogenase, to the physiological keto form of oxaloacetate. It is thereby required to maximize aerobic respiration efficiency by preventing succinate dehydrogenase inhibition. This chain is Oxaloacetate tautomerase FAHD2B, mitochondrial, found in Bos taurus (Bovine).